Consider the following 391-residue polypeptide: Carbamoyl phosphate synthase small chain (391 aa).

Residues Met1–Glu202 are CPSase. Ser47, Gly254, and Gly256 together coordinate L-glutamine. A Glutamine amidotransferase type-1 domain is found at Lys206–Ala391. Catalysis depends on Cys282, which acts as the Nucleophile. Leu283, Gln286, Asn324, Gly326, and Phe327 together coordinate L-glutamine. Residues His366 and Glu368 contribute to the active site.

The protein belongs to the CarA family. As to quaternary structure, composed of two chains; the small (or glutamine) chain promotes the hydrolysis of glutamine to ammonia, which is used by the large (or ammonia) chain to synthesize carbamoyl phosphate. Tetramer of heterodimers (alpha,beta)4.

It catalyses the reaction hydrogencarbonate + L-glutamine + 2 ATP + H2O = carbamoyl phosphate + L-glutamate + 2 ADP + phosphate + 2 H(+). It carries out the reaction L-glutamine + H2O = L-glutamate + NH4(+). The protein operates within amino-acid biosynthesis; L-arginine biosynthesis; carbamoyl phosphate from bicarbonate: step 1/1. It functions in the pathway pyrimidine metabolism; UMP biosynthesis via de novo pathway; (S)-dihydroorotate from bicarbonate: step 1/3. Its function is as follows. Small subunit of the glutamine-dependent carbamoyl phosphate synthetase (CPSase). CPSase catalyzes the formation of carbamoyl phosphate from the ammonia moiety of glutamine, carbonate, and phosphate donated by ATP, constituting the first step of 2 biosynthetic pathways, one leading to arginine and/or urea and the other to pyrimidine nucleotides. The small subunit (glutamine amidotransferase) binds and cleaves glutamine to supply the large subunit with the substrate ammonia. The protein is Carbamoyl phosphate synthase small chain of Xanthomonas axonopodis pv. citri (strain 306).